A 417-amino-acid polypeptide reads, in one-letter code: MKKYIVKCPGCGEVRDQYALHCPDDDALPRTEYFKKQIVPADMPGMWRYYDWLPVNGIIEKGSGRPVTYKSEGFAKELRLSDLNITFNGYWPENEGFIRTCSFKDLESFPTMQRLLENNERRVLVVASAGNTARAFAHVASITGYPLLLIVPKNSTHRLWTTEEDTSSVCTVTVDGDYYQAIAMAEKIAARDGFVSEGGARNVARRDGMGTVMLDAVLTTKSLPQHYFQAVGSGTGGISAWEAAMRLIEDGRFGNNMPRLHLAQNLPCAPLYSTWTGEQTNGNCPEEMYDDVLFNRKPPYLATGGVKDALDDTNGIIYGITNKEADEARKIFEENEGIDILPAPAIACAAIMKALEKGEIKADENIVLNITGGGQKRLEEELPTRQLSVDLALSPDDKDAENKILEKVAELLKNGGY.

N6-(pyridoxal phosphate)lysine is present on K104. Positions 131 and 371 each coordinate pyridoxal 5'-phosphate.

It belongs to the threonine synthase family. Cysteate synthase subfamily. In terms of assembly, homotrimer. Requires pyridoxal 5'-phosphate as cofactor.

The enzyme catalyses O-phospho-L-serine + sulfite + H(+) = L-cysteate + phosphate. It functions in the pathway cofactor biosynthesis; coenzyme M biosynthesis. Specifically catalyzes the beta-elimination of phosphate from L-phosphoserine and the beta-addition of sulfite to the dehydroalanine intermediate to produce L-cysteate. The chain is Cysteate synthase from Methanococcoides burtonii (strain DSM 6242 / NBRC 107633 / OCM 468 / ACE-M).